A 351-amino-acid polypeptide reads, in one-letter code: MEIKEHIINLPKHIYTGYGILDNFRNYLQTLNLPQPFLVITGPVIHQEIFSKRIEEHIKDFKYEVVIVNKSDLSEAEKVEDIARQKGIKTILGVGGGTVIDIAKFTAYKIDREFISIPTSPSHDGITSPFAAIKGLGKPISIKAKEPLAIISDVEILASAPRRLINAGIGDTLGKITAVRDWRLAHKLRGEYYGDYTASLALMSARHALSCTKIINKDIRAGVRVLTEALISSGVAMGMAGSTRPASGSEHLFAHAIELLYPNLGLHGELVALGTIMMAYIHGINWRRIRRAMKKIGLPVTSKQIGIPDEGIIKALTIAHSIRPERYTILGDRGLTWESAEKIARETGVIS.

NAD(+) contacts are provided by residues 97–101 (GTVID) and 119–122 (TSPS). Aspartate 124 contributes to the substrate binding site. Serine 128 is a binding site for NAD(+). Aspartate 171 contacts substrate. Zn(2+) is bound by residues aspartate 171 and histidine 251. Residue histidine 255 participates in substrate binding. Histidine 267 lines the Zn(2+) pocket.

Belongs to the glycerol-1-phosphate dehydrogenase family. As to quaternary structure, homodimer. Zn(2+) serves as cofactor.

It is found in the cytoplasm. The enzyme catalyses sn-glycerol 1-phosphate + NAD(+) = dihydroxyacetone phosphate + NADH + H(+). It carries out the reaction sn-glycerol 1-phosphate + NADP(+) = dihydroxyacetone phosphate + NADPH + H(+). It functions in the pathway membrane lipid metabolism; glycerophospholipid metabolism. In terms of biological role, catalyzes the NAD(P)H-dependent reduction of dihydroxyacetonephosphate (DHAP or glycerone phosphate) to glycerol 1-phosphate (G1P). The G1P thus generated is used as the glycerophosphate backbone of phospholipids in the cellular membranes of Archaea. In Sulfolobus acidocaldarius (strain ATCC 33909 / DSM 639 / JCM 8929 / NBRC 15157 / NCIMB 11770), this protein is Glycerol-1-phosphate dehydrogenase [NAD(P)+].